Reading from the N-terminus, the 176-residue chain is DNA-directed RNA polymerase II subunit 7 (176 aa).

It belongs to the eukaryotic RPB7/RPC8 RNA polymerase subunit family. As to quaternary structure, component of the RNA polymerase II complex consisting of at least 12 subunits. Interacts with NRPB4.

The protein resides in the nucleus. Its function is as follows. DNA-dependent RNA polymerase catalyzes the transcription of DNA into RNA using the four ribonucleoside triphosphates as substrates. Component of RNA polymerase II which synthesizes mRNA precursors and many functional non-coding RNAs. Pol II is the central component of the basal RNA polymerase II transcription machinery. It is composed of mobile elements that move relative to each other. NRPB7 is part of a subcomplex with NRPB4 that binds to a pocket formed by NRPB1, NRPB2 and NRPB6 at the base of the clamp element. The NRBP4-NRPB7 subcomplex seems to lock the clamp via NRPB7 in the closed conformation thus preventing double-stranded DNA to enter the active site cleft. The NRPB4-NRPB7 subcomplex binds single-stranded DNA and RNA. The polypeptide is DNA-directed RNA polymerase II subunit 7 (NRPB7) (Arabidopsis thaliana (Mouse-ear cress)).